The chain runs to 1169 residues: Phospholipid-transporting ATPase IF (1169 aa).

At 1 to 47 (LGFDPPHQSDTRTIYIANRFPQNGLYTPQKFIDNRIISSKYTVWNFV) the chain is on the cytoplasmic side. A helical transmembrane segment spans residues 48–69 (PKNLFEQFRRVANFYFLIIFLV). Over 70 to 74 (QLMID) the chain is Extracellular. Residues 75–96 (TPTSPITSGLPLFFVITVTAIK) traverse the membrane as a helical segment. At 97–281 (QGYEDWLRHN…SAVEKSMNTF (185 aa)) the chain is on the cytoplasmic side. Residues 282 to 303 (LIIYLIILISEAIISTILKYTW) traverse the membrane as a helical segment. The Extracellular segment spans residues 304–333 (QAEEKWDEPWYNQKTEHQRNSSKILRFISD). Residues 334-351 (FLAFLVLYNFIIPISLYV) form a helical membrane-spanning segment. Topologically, residues 352–868 (TVEMQKFLGS…HGHFYYIRIA (517 aa)) are cytoplasmic. The active-site 4-aspartylphosphate intermediate is the Asp399. ATP contacts are provided by Asp399, Lys400, Thr401, Glu523, Phe564, Lys587, Arg618, Thr698, Gly699, Asp700, Arg786, and Lys792. Asp399 is a binding site for Mg(2+). Thr401 lines the Mg(2+) pocket. Residues 794–802 (KVIRLIKIS) form a required for binding to the RING-finger of HLTF region. Asp813 is a Mg(2+) binding site. Residues Asn816 and Asp817 each coordinate ATP. Residue Asp817 coordinates Mg(2+). Residues 869–890 (TLVQYFFYKNVCFITPQFLYQF) traverse the membrane as a helical segment. Over 891–902 (YCLFSQQTLYDS) the chain is Extracellular. A helical transmembrane segment spans residues 903–922 (VYLTLYNICFTSLPILIYSL). Residues 923–952 (LEQHIDPHILQNKPTLYRDISKNRLLSIKT) are Cytoplasmic-facing. Residues 953–974 (FLYWTILGFSRSFIFLFGSYFL) traverse the membrane as a helical segment. Topologically, residues 975 to 989 (IGKDASLLGNGQMFG) are extracellular. The chain crosses the membrane as a helical span at residues 990 to 1012 (NWTFGTLVFTVMVITVTVKMALE). At 1013 to 1017 (THFWT) the chain is on the cytoplasmic side. Residues 1018–1039 (WINHLVTWGSIIFYFVFSLFYG) traverse the membrane as a helical segment. The Extracellular portion of the chain corresponds to 1040–1057 (GILWPFLGSQNMYFVFIQ). The helical transmembrane segment at 1058–1082 (LVSSGSAWFAIILMVVTCLFLDVMK) threads the bilayer. Over 1083-1169 (KVFDRQLHPT…TLSTMDSSTC (87 aa)) the chain is Cytoplasmic. At Ser1146 the chain carries Phosphoserine.

Belongs to the cation transport ATPase (P-type) (TC 3.A.3) family. Type IV subfamily. In terms of assembly, component of a P4-ATPase flippase complex which consists of a catalytic alpha subunit ATP11B and an accessory beta subunit TMEM30A. Interacts with HLTF (via the RING-finger). The cofactor is Mg(2+). Ubiquitously expressed.

The protein resides in the recycling endosome membrane. The protein localises to the early endosome. It is found in the endoplasmic reticulum. It localises to the golgi apparatus. Its subcellular location is the trans-Golgi network. The protein resides in the nucleus inner membrane. The enzyme catalyses ATP + H2O + phospholipidSide 1 = ADP + phosphate + phospholipidSide 2.. The catalysed reaction is a 1,2-diacyl-sn-glycero-3-phospho-L-serine(out) + ATP + H2O = a 1,2-diacyl-sn-glycero-3-phospho-L-serine(in) + ADP + phosphate + H(+). It catalyses the reaction a 1,2-diacyl-sn-glycero-3-phosphoethanolamine(out) + ATP + H2O = a 1,2-diacyl-sn-glycero-3-phosphoethanolamine(in) + ADP + phosphate + H(+). Functionally, catalytic component of a P4-ATPase flippase complex which catalyzes the hydrolysis of ATP coupled to the transport of aminophospholipids, phosphatidylserines (PS) and phosphatidylethanolamines (PE), from the outer to the inner leaflet of intracellular membranes. May contribute to the maintenance of membrane lipid asymmetry in endosome compartment. Its function is as follows. Appears to play a role in the subnuclear trafficking of transcription factors with RING motifs. The protein is Phospholipid-transporting ATPase IF (ATP11B) of Oryctolagus cuniculus (Rabbit).